The sequence spans 1370 residues: Reverse gyrase 1 (1370 aa).

The RG N-terminal-type zinc-finger motif lies at 6-47 (AASRGVYRYLCPNCGGPNSEERLSRGLPCPRCLPRLPRKGVS). Positions 16, 19, 34, and 37 each coordinate Zn(2+). ATP contacts are provided by residues Q95 and 112–119 (APTGVGKT). Positions 99-287 (AKRLARGDSF…RKKLLEVKRR (189 aa)) constitute a Helicase ATP-binding domain. The DEAD box signature appears at 220–223 (DDVD). Residues 643–1370 (ELVRTALLVV…VSRVWGAGVG (728 aa)) form a topoisomerase I region. A Toprim domain is found at 647–825 (TALLVVESPN…DIKRLEFHEV (179 aa)). Residue E653 coordinates Mg(2+). The segment at 744–772 (IKRCLDCGYQFVDEASRCPRCGSELIRNS) adopts an RG C-terminal-type zinc-finger fold. The Zn(2+) site is built by C747, C750, C761, and C764. D794 serves as a coordination point for Mg(2+). Residues 841–1323 (DDNLVDAQVV…SVFNEISDLA (483 aa)) enclose the Topo IA-type catalytic domain. The active-site O-(5'-phospho-DNA)-tyrosine intermediate is the Y1028.

It in the N-terminal section; belongs to the DEAD box helicase family. DDVD subfamily. In the C-terminal section; belongs to the type IA topoisomerase family. In terms of assembly, monomer. Zn(2+) is required as a cofactor. The cofactor is Mg(2+).

The protein localises to the cytoplasm. It carries out the reaction ATP + H2O = ADP + phosphate + H(+). Functionally, modifies the topological state of DNA by introducing positive supercoils in an ATP-dependent process, increasing the linking number in steps of +1. Binds to single-stranded DNA, transiently cleaves and then rejoins the ends, introducing a positive supercoil in the process. The scissile phosphodiester is attacked by the catalytic tyrosine of the enzyme, resulting in the formation of a DNA-(5'-phosphotyrosyl)-enzyme intermediate. Probably involved in rewinding DNA strands in regions of the chromosome that have opened up to allow replication, transcription, DNA repair and/or for DNA protection. The sequence is that of Reverse gyrase 1 from Aeropyrum pernix (strain ATCC 700893 / DSM 11879 / JCM 9820 / NBRC 100138 / K1).